Consider the following 920-residue polypeptide: Translation initiation factor IF-2 (920 aa).

Composition is skewed to basic and acidic residues over residues 149–175, 186–197, and 255–265; these read EAEMKAAEEARQKEVAAPVVEKEEKPV, AEKKATADKAAK, and AKPEGADDKKK. Disordered regions lie at residues 149–197 and 245–319; these read EAEM…KAAK and EAKK…KQRQ. Residues 301–311 show a composition bias toward gly residues; sequence SSGGVGGWRSG. Residues 418-585 form the tr-type G domain; that stretch reads PRPPVVTVMG…NVLLQAEILE (168 aa). Positions 427–434 are G1; the sequence is GHVDHGKT. GTP is bound at residue 427-434; sequence GHVDHGKT. Residues 452 to 456 are G2; it reads GITQH. A G3 region spans residues 473 to 476; it reads DTPG. Residues 473-477 and 527-530 each bind GTP; these read DTPGH and NKID. A G4 region spans residues 527 to 530; the sequence is NKID. The tract at residues 563-565 is G5; the sequence is SAK.

The protein belongs to the TRAFAC class translation factor GTPase superfamily. Classic translation factor GTPase family. IF-2 subfamily.

The protein localises to the cytoplasm. Its function is as follows. One of the essential components for the initiation of protein synthesis. Protects formylmethionyl-tRNA from spontaneous hydrolysis and promotes its binding to the 30S ribosomal subunits. Also involved in the hydrolysis of GTP during the formation of the 70S ribosomal complex. The chain is Translation initiation factor IF-2 from Polynucleobacter asymbioticus (strain DSM 18221 / CIP 109841 / QLW-P1DMWA-1) (Polynucleobacter necessarius subsp. asymbioticus).